We begin with the raw amino-acid sequence, 1423 residues long: DNA-directed RNA polymerase subunit beta' (1423 aa).

Zn(2+) is bound by residues Cys-71, Cys-73, Cys-86, and Cys-89. Residues Asp-461, Asp-463, and Asp-465 each contribute to the Mg(2+) site. Residues Cys-815, Cys-889, Cys-896, and Cys-899 each coordinate Zn(2+).

This sequence belongs to the RNA polymerase beta' chain family. The RNAP catalytic core consists of 2 alpha, 1 beta, 1 beta' and 1 omega subunit. When a sigma factor is associated with the core the holoenzyme is formed, which can initiate transcription. It depends on Mg(2+) as a cofactor. The cofactor is Zn(2+).

It catalyses the reaction RNA(n) + a ribonucleoside 5'-triphosphate = RNA(n+1) + diphosphate. Its function is as follows. DNA-dependent RNA polymerase catalyzes the transcription of DNA into RNA using the four ribonucleoside triphosphates as substrates. This is DNA-directed RNA polymerase subunit beta' from Actinobacillus pleuropneumoniae serotype 3 (strain JL03).